Consider the following 1387-residue polypeptide: Magnesium-chelatase subunit ChlH, chloroplastic (1387 aa).

Residues 1-50 constitute a chloroplast transit peptide; the sequence is MSSLVSTPFTTATGVQKKLGAPVPLHSFLLSRRQPAAGAGRGRAAAAAIR.

The protein belongs to the Mg-chelatase subunit H family. In terms of assembly, the magnesium chelatase complex is a heterotrimer consisting of subunits CHLI, CHLD and CHLH.

Its subcellular location is the plastid. The protein localises to the chloroplast stroma. It localises to the chloroplast membrane. The catalysed reaction is protoporphyrin IX + Mg(2+) + ATP + H2O = Mg-protoporphyrin IX + ADP + phosphate + 3 H(+). Its pathway is porphyrin-containing compound metabolism; chlorophyll biosynthesis. Involved in chlorophyll biosynthesis. Catalyzes the insertion of magnesium ion into protoporphyrin IX to yield Mg-protoporphyrin IX. The reaction takes place in two steps, with an ATP-dependent activation followed by an ATP-dependent chelation step. May be involved in the plastid-to-nucleus retrograde signaling. The sequence is that of Magnesium-chelatase subunit ChlH, chloroplastic (CHLH) from Oryza sativa subsp. japonica (Rice).